Consider the following 1170-residue polypeptide: Cellulose synthase-like protein D2 (1170 aa).

Disordered stretches follow at residues 1-75 (MASN…PESG) and 269-295 (NEVDNGGGGGGGGGLGGGDGQPAEFTS). The segment covering 10-24 (RHSNSSRLSRMSYSG) has biased composition (low complexity). Residues 273-288 (NGGGGGGGGGLGGGDG) show a composition bias toward gly residues. 2 consecutive transmembrane segments (helical) span residues 311–331 (VLSPYRLLILIRMAVLGLFLA) and 341–361 (AMWLWGMSVVCELWFGLSWLL). The active site involves Asp-441. The stretch at 527–551 (HAREEIKAMKRQREAALDDVVEAVK) forms a coiled coil. Asp-873 is a catalytic residue. 6 helical membrane-spanning segments follow: residues 955-975 (IFLIVYCFLPALSLFSGQFIV), 981-1001 (TFLTYLLVITLTMCMLAVLEI), 1027-1047 (LAAVLQGLLKVIAGIEISFTL), 1070-1090 (SLMIPPIVIMMVNLIAIAVGF), 1104-1124 (LLGGVFFSFWVLAHLYPFAKG), and 1134-1154 (TIVFVWSGLLAITISLLWVAI).

It belongs to the glycosyltransferase 2 family. Plant cellulose synthase-like D subfamily.

It localises to the golgi apparatus membrane. In terms of biological role, thought to be a Golgi-localized beta-glycan synthase that polymerize the backbones of noncellulosic polysaccharides (hemicelluloses) of plant cell wall. The chain is Cellulose synthase-like protein D2 (CSLD2) from Oryza sativa subsp. indica (Rice).